The primary structure comprises 443 residues: MTIYALSTGPGISGIAIVRVSGKDTKKVIKLLTNAALPETRVATLRKINKINTSELIDEGIILWFPGPESYTGEDMAEFHIHGSKAVIDALHHSISKIKNCRLADPGEFTKLAFQNGKINLLKAESIADLISAETEIQRQQAIKIMNGKSADKFNNLREKLLKILSHVEAKIDFPDEDLPEDILKNIKKISNEVILNIKKILDDQKVGERIREGFKIAIIGPTNAGKSSLLNHLSNRDVAIVSEIAGTTRDVIETHLNIDGYPVVVSDTAGIRDSKNEIEKKGIKLALDKADNADLKLIVIDAKSIDFKGVLKELMDENAILVINKSDLLNKDLNSEIKNYEHVLISVKNNLNLEDLISKIKNKLKNKFITSEDILITRARHRQHLEQSLNCLKNFEEKNEAEDFDKAAEDLRLATRHLGMIVGKVDVEEILGSIFNDFCIGK.

(6S)-5-formyl-5,6,7,8-tetrahydrofolate contacts are provided by Arg19, Glu78, and Lys118. The 153-residue stretch at 214 to 366 folds into the TrmE-type G domain; sequence GFKIAIIGPT…LISKIKNKLK (153 aa). K(+) is bound at residue Asn224. Residues 224–229, 243–249, and 268–271 each bind GTP; these read NAGKSS, SEIAGTT, and DTAG. Mg(2+) is bound at residue Ser228. Ser243, Ile245, and Thr248 together coordinate K(+). Thr249 is a binding site for Mg(2+). A (6S)-5-formyl-5,6,7,8-tetrahydrofolate-binding site is contributed by Lys443.

The protein belongs to the TRAFAC class TrmE-Era-EngA-EngB-Septin-like GTPase superfamily. TrmE GTPase family. Homodimer. Heterotetramer of two MnmE and two MnmG subunits. It depends on K(+) as a cofactor.

The protein resides in the cytoplasm. Functionally, exhibits a very high intrinsic GTPase hydrolysis rate. Involved in the addition of a carboxymethylaminomethyl (cmnm) group at the wobble position (U34) of certain tRNAs, forming tRNA-cmnm(5)s(2)U34. In Pelagibacter ubique (strain HTCC1062), this protein is tRNA modification GTPase MnmE.